The chain runs to 164 residues: 2-C-methyl-D-erythritol 2,4-cyclodiphosphate synthase (164 aa).

Positions 9 and 11 each coordinate a divalent metal cation. Residues 9–11 (DVH) and 35–36 (HS) contribute to the 4-CDP-2-C-methyl-D-erythritol 2-phosphate site. H43 lines the a divalent metal cation pocket. Residues 57–59 (DIG), 62–66 (FPDTD), 133–136 (TTTE), F140, and R143 contribute to the 4-CDP-2-C-methyl-D-erythritol 2-phosphate site.

This sequence belongs to the IspF family. As to quaternary structure, homotrimer. It depends on a divalent metal cation as a cofactor.

It carries out the reaction 4-CDP-2-C-methyl-D-erythritol 2-phosphate = 2-C-methyl-D-erythritol 2,4-cyclic diphosphate + CMP. The protein operates within isoprenoid biosynthesis; isopentenyl diphosphate biosynthesis via DXP pathway; isopentenyl diphosphate from 1-deoxy-D-xylulose 5-phosphate: step 4/6. Involved in the biosynthesis of isopentenyl diphosphate (IPP) and dimethylallyl diphosphate (DMAPP), two major building blocks of isoprenoid compounds. Catalyzes the conversion of 4-diphosphocytidyl-2-C-methyl-D-erythritol 2-phosphate (CDP-ME2P) to 2-C-methyl-D-erythritol 2,4-cyclodiphosphate (ME-CPP) with a corresponding release of cytidine 5-monophosphate (CMP). This is 2-C-methyl-D-erythritol 2,4-cyclodiphosphate synthase from Syntrophotalea carbinolica (strain DSM 2380 / NBRC 103641 / GraBd1) (Pelobacter carbinolicus).